A 271-amino-acid chain; its full sequence is Type III pantothenate kinase (271 aa).

6-13 serves as a coordination point for ATP; sequence DVRNTHTV. 109–112 provides a ligand contact to substrate; that stretch reads GADR. D111 (proton acceptor) is an active-site residue. D131 contacts K(+). S134 lines the ATP pocket. A substrate-binding site is contributed by T186.

This sequence belongs to the type III pantothenate kinase family. As to quaternary structure, homodimer. The cofactor is NH4(+). Requires K(+) as cofactor.

Its subcellular location is the cytoplasm. It catalyses the reaction (R)-pantothenate + ATP = (R)-4'-phosphopantothenate + ADP + H(+). It participates in cofactor biosynthesis; coenzyme A biosynthesis; CoA from (R)-pantothenate: step 1/5. Functionally, catalyzes the phosphorylation of pantothenate (Pan), the first step in CoA biosynthesis. The polypeptide is Type III pantothenate kinase (Mycolicibacterium vanbaalenii (strain DSM 7251 / JCM 13017 / BCRC 16820 / KCTC 9966 / NRRL B-24157 / PYR-1) (Mycobacterium vanbaalenii)).